An 87-amino-acid chain; its full sequence is U3-theraphotoxin-Hhn1a 2 (87 aa).

Positions 1–24 (MVNMKASMFLTFAGLVLLFVVCYA) are cleaved as a signal peptide. Residues 25–52 (SESEEKEFPKEMLSSIFAVDDDFKQEER) constitute a propeptide that is removed on maturation. Intrachain disulfides connect Cys54/Cys67, Cys61/Cys72, and Cys66/Cys79.

It belongs to the neurotoxin 10 (Hwtx-1) family. 51 (Hntx-8) subfamily. Hntx-8 sub-subfamily. In terms of tissue distribution, expressed by the venom gland.

It localises to the secreted. Its function is as follows. Ion channel inhibitor. In Cyriopagopus hainanus (Chinese bird spider), this protein is U3-theraphotoxin-Hhn1a 2.